The chain runs to 104 residues: Portal vertex auxiliary protein (104 aa).

C25 and C88 are disulfide-bonded.

In terms of assembly, homodimer; disulfide-linked. Interacts with the major capsid protein.

The protein resides in the virion. This Bacteroides intestinalis (Bacteroides phage PhiCrAss001) protein is Portal vertex auxiliary protein.